The chain runs to 326 residues: tRNA-modifying protein YgfZ (326 aa).

Folate is bound by residues tryptophan 27 and tryptophan 189.

The protein belongs to the tRNA-modifying YgfZ family.

It localises to the cytoplasm. Folate-binding protein involved in regulating the level of ATP-DnaA and in the modification of some tRNAs. It is probably a key factor in regulatory networks that act via tRNA modification, such as initiation of chromosomal replication. In Enterobacter sp. (strain 638), this protein is tRNA-modifying protein YgfZ.